A 576-amino-acid polypeptide reads, in one-letter code: MPALSTGAGSDTGLYEILATLPAQLQPHVDSQEDLTFLWDMFGEKSLHSLVKIHEKLHYYEKENPMPVIHSATALAEELAEELQSKSLNSEIRELLKLLSKPNLKALLSVHDTVAQKSYDPVLPPMPDDIDDDEDSVKIIRLVKNREPLGATIKKDEKTGAIVVARIMRGGAADRSGLIHVGDELREVNGISVEDKKPEEIIHILAQSQGAITFKIIPSIKEEPPNNDGKMFVKALFDYYPNEDKAIPCKEAGLSFRKGDILQIMSQDDATWWQAKHEGDANPRAGLIPSKQFQERRFALRKPVVSNQPQKVPNRKSSGFRRSFRLSRKDRKTNKFMYECKKSDQYDTADVPTYEEVALYQRKPNEKYRLVILVGPVGVGVNELKRKVLIGNSQHYGVTVPHTTRGKRSQENDGVEYIFISKHLFETDIHNNKFIEYGEYKNNYYGTSLDSVRSVLAKNKICLLDVQPNSLKHLRTSEFKPFVIFIKPPTIERLRETRRNAKVISGKDERGAAKPFSDEDFEEMIQSAEAMEAQYDHFFDTTIVNDDLSAAYNELRSTLERLEMEGFWVPVSWLHS.

L27 domains are found at residues 10 to 63 (SDTG…YEKE) and 65 to 122 (PMPV…YDPV). The 82-residue stretch at 139-220 (IIRLVKNREP…AITFKIIPSI (82 aa)) folds into the PDZ domain. One can recognise an SH3 domain in the interval 228–298 (DGKMFVKALF…PSKQFQERRF (71 aa)). A Guanylate kinase-like domain is found at 368 to 560 (YRLVILVGPV…AYNELRSTLE (193 aa)).

This sequence belongs to the MAGUK family.

The protein localises to the membrane. It localises to the cell junction. The protein resides in the tight junction. Its subcellular location is the adherens junction. Functionally, acts as an important adapter that promotes epithelial cell polarity and tight junction formation. Involved in the assembly of protein complexes at sites of cell-cell contact. In Xenopus tropicalis (Western clawed frog), this protein is MAGUK p55 subfamily member 7 (mpp7).